We begin with the raw amino-acid sequence, 147 residues long: NADH-quinone oxidoreductase subunit A (147 aa).

Transmembrane regions (helical) follow at residues 16–36, 68–88, and 97–117; these read FAIF…GGWF, FYLV…LFAW, and WVGF…LVYL.

This sequence belongs to the complex I subunit 3 family. NDH-1 is composed of 13 different subunits. Subunits NuoA, H, J, K, L, M, N constitute the membrane sector of the complex.

The protein localises to the cell inner membrane. The enzyme catalyses a quinone + NADH + 5 H(+)(in) = a quinol + NAD(+) + 4 H(+)(out). Functionally, NDH-1 shuttles electrons from NADH, via FMN and iron-sulfur (Fe-S) centers, to quinones in the respiratory chain. The immediate electron acceptor for the enzyme in this species is believed to be ubiquinone. Couples the redox reaction to proton translocation (for every two electrons transferred, four hydrogen ions are translocated across the cytoplasmic membrane), and thus conserves the redox energy in a proton gradient. The polypeptide is NADH-quinone oxidoreductase subunit A (Salmonella paratyphi A (strain ATCC 9150 / SARB42)).